A 21-amino-acid polypeptide reads, in one-letter code: Phospholipase A2 crotoxin basic chain (21 aa).

Belongs to the phospholipase A2 family. Group II subfamily. The cofactor is Ca(2+). Expressed by the venom gland.

Its subcellular location is the secreted. The catalysed reaction is a 1,2-diacyl-sn-glycero-3-phosphocholine + H2O = a 1-acyl-sn-glycero-3-phosphocholine + a fatty acid + H(+). Its function is as follows. Snake venom phospholipase A2 (PLA2) that induces a conspicuous local myotoxic effect and moderate footpad edema. In vitro, it shows anticoagulant effects and is not cytotoxic on myoblast but is able to lyse myotubes. PLA2 catalyzes the calcium-dependent hydrolysis of the 2-acyl groups in 3-sn-phosphoglycerides. The polypeptide is Phospholipase A2 crotoxin basic chain (Crotalus durissus cumanensis (South American rattlesnake)).